The chain runs to 353 residues: Putative transcription factor MTF1 (353 aa).

Composition is skewed to polar residues over residues 11 to 26 (VTRS…TSPA) and 36 to 58 (EPSN…QQGN). Disordered regions lie at residues 11–96 (VTRS…ALPC) and 129–174 (FTTT…TTNP). Low complexity-rich tracts occupy residues 59-95 (TEAS…PALP) and 133-145 (NSSP…SPSS). Residues 148–164 (SHTRKNSKYTVRHHRTR) show a composition bias toward basic residues. Residues 165–174 (QSSFNGTTNP) are compositionally biased toward polar residues.

It localises to the nucleus. May be involved in transcriptional activation. This Mucor circinelloides f. lusitanicus (Mucor racemosus var. lusitanicus) protein is Putative transcription factor MTF1 (MTF1).